The primary structure comprises 227 residues: Lipoprotein-releasing system ATP-binding protein LolD (227 aa).

Positions 6–227 (LTSQKLYKSY…LHEGSLYARE (222 aa)) constitute an ABC transporter domain. 42 to 49 (GPSGSGKS) lines the ATP pocket.

Belongs to the ABC transporter superfamily. Lipoprotein translocase (TC 3.A.1.125) family. In terms of assembly, the complex is composed of two ATP-binding proteins (LolD) and two transmembrane proteins (LolC and LolE).

It is found in the cell inner membrane. In terms of biological role, part of the ABC transporter complex LolCDE involved in the translocation of mature outer membrane-directed lipoproteins, from the inner membrane to the periplasmic chaperone, LolA. Responsible for the formation of the LolA-lipoprotein complex in an ATP-dependent manner. This Legionella pneumophila (strain Paris) protein is Lipoprotein-releasing system ATP-binding protein LolD.